The primary structure comprises 163 residues: Large ribosomal subunit protein bL19 (163 aa).

Positions 131–150 are enriched in basic and acidic residues; the sequence is ISQERKASGKDQASKPEVRP. A disordered region spans residues 131-163; that stretch reads ISQERKASGKDQASKPEVRPQGKKPAPKPKAKK. The span at 151 to 163 shows a compositional bias: basic residues; the sequence is QGKKPAPKPKAKK.

This sequence belongs to the bacterial ribosomal protein bL19 family.

Its function is as follows. This protein is located at the 30S-50S ribosomal subunit interface and may play a role in the structure and function of the aminoacyl-tRNA binding site. In Rhodospirillum rubrum (strain ATCC 11170 / ATH 1.1.1 / DSM 467 / LMG 4362 / NCIMB 8255 / S1), this protein is Large ribosomal subunit protein bL19.